We begin with the raw amino-acid sequence, 328 residues long: Reticulocalbin-3 (328 aa).

Positions 1–20 (MMWRPSVLLLLLLLRHGAQG) are cleaved as a signal peptide. The tract at residues 19–49 (QGKPSPDAGPHGQGRVHQAAPLSDAPHDDAH) is disordered. EF-hand domains lie at 75–112 (ESQA…TQQR), 113–148 (HIRD…HYAP), 163–198 (KMLA…EEFP), 200–235 (MRDI…AEPG), 241–276 (WVQT…PAQD), and 277–312 (QPLV…FVGS). Ca(2+)-binding residues include aspartate 92, aspartate 94, tryptophan 96, glutamate 101, aspartate 126, aspartate 128, aspartate 130, arginine 132, and glutamate 137. The N-linked (GlcNAc...) asparagine glycan is linked to asparagine 140. Ca(2+) is bound by residues aspartate 176, aspartate 178, aspartate 180, methionine 182, glutamate 187, aspartate 213, asparagine 215, aspartate 217, tyrosine 219, glutamate 224, aspartate 254, asparagine 256, aspartate 258, histidine 260, glutamate 265, aspartate 290, aspartate 292, aspartate 294, arginine 296, and glutamate 301. The short motif at 325-328 (HDEL) is the Prevents secretion from ER element.

Belongs to the CREC family. In terms of assembly, interacts with PCSK6 (immature form including the propeptide); probably involved in the maturation and the secretion of PCSK6. In terms of processing, degraded by PCSK6 and other endoproteases including FURIN and PCSK5. N-glycosylated. As to expression, widely expressed.

It is found in the endoplasmic reticulum lumen. Its function is as follows. Probable molecular chaperone assisting protein biosynthesis and transport in the endoplasmic reticulum. Required for the proper biosynthesis and transport of pulmonary surfactant-associated protein A/SP-A, pulmonary surfactant-associated protein D/SP-D and the lipid transporter ABCA3. By regulating both the proper expression and the degradation through the endoplasmic reticulum-associated protein degradation pathway of these proteins plays a crucial role in pulmonary surfactant homeostasis. Has an anti-fibrotic activity by negatively regulating the secretion of type I and type III collagens. This calcium-binding protein also transiently associates with immature PCSK6 and regulates its secretion. This chain is Reticulocalbin-3, found in Homo sapiens (Human).